Reading from the N-terminus, the 650-residue chain is FAS-associated factor 1 (650 aa).

The region spanning 1–57 (MASNMDREMILADFQACTGIENIDEAITLLEQNNWDLVAAINGVIPQENGILQSEYG) is the UBA domain. The segment at 62-87 (PGPAFNPASHPASAPTSSSSSAFRPV) is disordered. A compositionally biased stretch (low complexity) spans 68 to 83 (PASHPASAPTSSSSSA). Phosphoserine is present on Ser-320. Positions 569 to 646 (NAEPVSKLRI…KLFPQETLFL (78 aa)) constitute a UBX domain. Thr-580 is modified (phosphothreonine). Ser-582 carries the phosphoserine modification.

Interacts with CDT1 and ATPase VCP/p97. Interacts (via UBA domain) with FAS (via death domain). Interacts (via UBA domain) with NLRP12 (via DAPIN/PYRIN domain). As to expression, most abundant in testis, slightly less abundant in skeletal muscle and heart, followed by prostate, thymus, ovary, small intestine, and colon. Not detected in the peripheral blood leukocytes.

The protein resides in the nucleus. Ubiquitin-binding protein. Required for the progression of DNA replication forks by targeting DNA replication licensing factor CDT1 for degradation. Potentiates but cannot initiate FAS-induced apoptosis. In Homo sapiens (Human), this protein is FAS-associated factor 1 (FAF1).